A 124-amino-acid chain; its full sequence is Histone H2B (124 aa).

Positions 1 to 33 are disordered; sequence MPEPAKSAPKKGSKKAVTKTAGKGGKKRKRSRK. 2 positions are modified to N6-acetyllysine: K6 and K11. Over residues 8–17 the composition is skewed to basic residues; it reads APKKGSKKAV. S13 carries the phosphoserine modification. N6-acetyllysine is present on residues K14 and K19. The O-linked (GlcNAc) serine glycan is linked to S111. K119 participates in a covalent cross-link: Glycyl lysine isopeptide (Lys-Gly) (interchain with G-Cter in ubiquitin).

The protein belongs to the histone H2B family. As to quaternary structure, the nucleosome is a histone octamer containing two molecules each of H2A, H2B, H3 and H4 assembled in one H3-H4 heterotetramer and two H2A-H2B heterodimers. The octamer wraps approximately 147 bp of DNA. In terms of processing, monoubiquitination of Lys-119 by BRE1 gives a specific tag for epigenetic transcriptional activation and is also prerequisite for histone H3 'Lys-4' and 'Lys-79' methylation. Post-translationally, phosphorylated during apoptosis; which facilitates apoptotic chromatin condensation. GlcNAcylation at Ser-111 promotes monoubiquitination of Lys-119. It fluctuates in response to extracellular glucose, and associates with transcribed genes.

It localises to the nucleus. Its subcellular location is the chromosome. Its function is as follows. Core component of nucleosome. Nucleosomes wrap and compact DNA into chromatin, limiting DNA accessibility to the cellular machineries which require DNA as a template. Histones thereby play a central role in transcription regulation, DNA repair, DNA replication and chromosomal stability. DNA accessibility is regulated via a complex set of post-translational modifications of histones, also called histone code, and nucleosome remodeling. The sequence is that of Histone H2B from Oncorhynchus mykiss (Rainbow trout).